Reading from the N-terminus, the 86-residue chain is Small ribosomal subunit protein uS17 (86 aa).

Belongs to the universal ribosomal protein uS17 family. In terms of assembly, part of the 30S ribosomal subunit.

Functionally, one of the primary rRNA binding proteins, it binds specifically to the 5'-end of 16S ribosomal RNA. The chain is Small ribosomal subunit protein uS17 from Desulfotalea psychrophila (strain LSv54 / DSM 12343).